The chain runs to 288 residues: Pyridoxal kinase PdxY (288 aa).

Substrate-binding positions include Ser9 and Thr44 to Gln45. Residues Asp111, Glu148, and Lys181 each contribute to the ATP site. Substrate is bound at residue Asp224.

The protein belongs to the pyridoxine kinase family. PdxY subfamily. In terms of assembly, homodimer. Mg(2+) serves as cofactor.

The enzyme catalyses pyridoxal + ATP = pyridoxal 5'-phosphate + ADP + H(+). It participates in cofactor metabolism; pyridoxal 5'-phosphate salvage; pyridoxal 5'-phosphate from pyridoxal: step 1/1. Its function is as follows. Pyridoxal kinase involved in the salvage pathway of pyridoxal 5'-phosphate (PLP). Catalyzes the phosphorylation of pyridoxal to PLP. This Haemophilus influenzae (strain ATCC 51907 / DSM 11121 / KW20 / Rd) protein is Pyridoxal kinase PdxY.